The sequence spans 183 residues: Shikimate kinase (183 aa).

ATP is bound at residue 19–24; that stretch reads GAGKTT. Thr23 contributes to the Mg(2+) binding site. The substrate site is built by Asp41, Arg65, and Gly87. An ATP-binding site is contributed by Arg124. Substrate is bound at residue Arg143.

Belongs to the shikimate kinase family. As to quaternary structure, monomer. Mg(2+) serves as cofactor.

The protein localises to the cytoplasm. It carries out the reaction shikimate + ATP = 3-phosphoshikimate + ADP + H(+). It participates in metabolic intermediate biosynthesis; chorismate biosynthesis; chorismate from D-erythrose 4-phosphate and phosphoenolpyruvate: step 5/7. Functionally, catalyzes the specific phosphorylation of the 3-hydroxyl group of shikimic acid using ATP as a cosubstrate. The protein is Shikimate kinase of Thermosynechococcus vestitus (strain NIES-2133 / IAM M-273 / BP-1).